Here is a 393-residue protein sequence, read N- to C-terminus: O-phospho-L-seryl-tRNA:Cys-tRNA synthase 1 (393 aa).

Pyridoxal 5'-phosphate is bound by residues 85 to 86 (AR), N190, and 213 to 215 (SGH). K216 carries the post-translational modification N6-(pyridoxal phosphate)lysine.

Belongs to the SepCysS family. As to quaternary structure, homodimer. Interacts with SepRS. Requires pyridoxal 5'-phosphate as cofactor.

The catalysed reaction is O-phospho-L-seryl-tRNA(Cys) + hydrogen sulfide + H(+) = L-cysteinyl-tRNA(Cys) + phosphate. In terms of biological role, converts O-phospho-L-seryl-tRNA(Cys) (Sep-tRNA(Cys)) to L-cysteinyl-tRNA(Cys) (Cys-tRNA(Cys)). The polypeptide is O-phospho-L-seryl-tRNA:Cys-tRNA synthase 1 (Methanospirillum hungatei JF-1 (strain ATCC 27890 / DSM 864 / NBRC 100397 / JF-1)).